The chain runs to 197 residues: Imidazoleglycerol-phosphate dehydratase (197 aa).

Belongs to the imidazoleglycerol-phosphate dehydratase family.

It is found in the cytoplasm. The enzyme catalyses D-erythro-1-(imidazol-4-yl)glycerol 3-phosphate = 3-(imidazol-4-yl)-2-oxopropyl phosphate + H2O. It participates in amino-acid biosynthesis; L-histidine biosynthesis; L-histidine from 5-phospho-alpha-D-ribose 1-diphosphate: step 6/9. The polypeptide is Imidazoleglycerol-phosphate dehydratase (Bradyrhizobium sp. (strain ORS 278)).